The chain runs to 803 residues: Phosphoribosylformylglycinamidine synthase subunit PurL (803 aa).

Residue histidine 65 is part of the active site. Residues tyrosine 68 and lysine 107 each contribute to the ATP site. Position 109 (glutamate 109) interacts with Mg(2+). Residues 110–113 (SHNH) and arginine 132 each bind substrate. The Proton acceptor role is filled by histidine 111. Aspartate 133 provides a ligand contact to Mg(2+). Glutamine 256 serves as a coordination point for substrate. Residue aspartate 284 coordinates Mg(2+). Position 328-330 (328-330 (ESQ)) interacts with substrate. Positions 537 and 574 each coordinate ATP. Asparagine 575 is a Mg(2+) binding site. Serine 577 lines the substrate pocket.

It belongs to the FGAMS family. In terms of assembly, monomer. Part of the FGAM synthase complex composed of 1 PurL, 1 PurQ and 2 PurS subunits.

It is found in the cytoplasm. The catalysed reaction is N(2)-formyl-N(1)-(5-phospho-beta-D-ribosyl)glycinamide + L-glutamine + ATP + H2O = 2-formamido-N(1)-(5-O-phospho-beta-D-ribosyl)acetamidine + L-glutamate + ADP + phosphate + H(+). The protein operates within purine metabolism; IMP biosynthesis via de novo pathway; 5-amino-1-(5-phospho-D-ribosyl)imidazole from N(2)-formyl-N(1)-(5-phospho-D-ribosyl)glycinamide: step 1/2. Its function is as follows. Part of the phosphoribosylformylglycinamidine synthase complex involved in the purines biosynthetic pathway. Catalyzes the ATP-dependent conversion of formylglycinamide ribonucleotide (FGAR) and glutamine to yield formylglycinamidine ribonucleotide (FGAM) and glutamate. The FGAM synthase complex is composed of three subunits. PurQ produces an ammonia molecule by converting glutamine to glutamate. PurL transfers the ammonia molecule to FGAR to form FGAM in an ATP-dependent manner. PurS interacts with PurQ and PurL and is thought to assist in the transfer of the ammonia molecule from PurQ to PurL. In Prochlorococcus marinus (strain NATL1A), this protein is Phosphoribosylformylglycinamidine synthase subunit PurL.